A 172-amino-acid polypeptide reads, in one-letter code: Low molecular mass early light-inducible protein HV90, chloroplastic (172 aa).

A chloroplast-targeting transit peptide spans 1–38 (MATMMSMSSFAGAAVVPRSSASSFGARSLPALGRRALV). A run of 2 helical transmembrane segments spans residues 106-126 (GQAW…VPLL) and 150-170 (FAML…APFI).

This sequence belongs to the ELIP/psbS family.

It localises to the plastid. Its subcellular location is the chloroplast membrane. In terms of biological role, probably involved in the integration of pigments into the mature pigment-protein complexes. The chain is Low molecular mass early light-inducible protein HV90, chloroplastic from Hordeum vulgare (Barley).